Here is a 494-residue protein sequence, read N- to C-terminus: Histidine--tRNA ligase (494 aa).

Residues 1–20 (MAKDQKKQPRPKAETPKGFR) form a disordered region.

Belongs to the class-II aminoacyl-tRNA synthetase family. In terms of assembly, homodimer.

The protein localises to the cytoplasm. The enzyme catalyses tRNA(His) + L-histidine + ATP = L-histidyl-tRNA(His) + AMP + diphosphate + H(+). In Paracoccus denitrificans (strain Pd 1222), this protein is Histidine--tRNA ligase.